A 314-amino-acid chain; its full sequence is Methionyl-tRNA formyltransferase (314 aa).

Position 112–115 (112–115) interacts with (6S)-5,6,7,8-tetrahydrofolate; the sequence is SLLP.

The protein belongs to the Fmt family.

It carries out the reaction L-methionyl-tRNA(fMet) + (6R)-10-formyltetrahydrofolate = N-formyl-L-methionyl-tRNA(fMet) + (6S)-5,6,7,8-tetrahydrofolate + H(+). Functionally, attaches a formyl group to the free amino group of methionyl-tRNA(fMet). The formyl group appears to play a dual role in the initiator identity of N-formylmethionyl-tRNA by promoting its recognition by IF2 and preventing the misappropriation of this tRNA by the elongation apparatus. The sequence is that of Methionyl-tRNA formyltransferase from Buchnera aphidicola subsp. Acyrthosiphon pisum (strain 5A).